The primary structure comprises 305 residues: NAD kinase (305 aa).

The Proton acceptor role is filled by Asp82. NAD(+)-binding positions include 82–83 (DG), 156–157 (ND), Arg184, Asp186, 197–202 (TAYALS), Ala221, and Gln255.

Belongs to the NAD kinase family. A divalent metal cation serves as cofactor.

It is found in the cytoplasm. The enzyme catalyses NAD(+) + ATP = ADP + NADP(+) + H(+). Its function is as follows. Involved in the regulation of the intracellular balance of NAD and NADP, and is a key enzyme in the biosynthesis of NADP. Catalyzes specifically the phosphorylation on 2'-hydroxyl of the adenosine moiety of NAD to yield NADP. This chain is NAD kinase, found in Cupriavidus pinatubonensis (strain JMP 134 / LMG 1197) (Cupriavidus necator (strain JMP 134)).